The primary structure comprises 254 residues: 4-hydroxy-tetrahydrodipicolinate reductase (254 aa).

7-12 (GASGRI) contacts NAD(+). NADP(+) is bound at residue Arg-35. Residues 91–93 (GTT) and 115–118 (AHNM) contribute to the NAD(+) site. His-147 (proton donor/acceptor) is an active-site residue. His-148 contacts (S)-2,3,4,5-tetrahydrodipicolinate. Lys-151 acts as the Proton donor in catalysis. 157–158 (GT) is a (S)-2,3,4,5-tetrahydrodipicolinate binding site.

This sequence belongs to the DapB family.

The protein resides in the cytoplasm. The enzyme catalyses (S)-2,3,4,5-tetrahydrodipicolinate + NAD(+) + H2O = (2S,4S)-4-hydroxy-2,3,4,5-tetrahydrodipicolinate + NADH + H(+). It catalyses the reaction (S)-2,3,4,5-tetrahydrodipicolinate + NADP(+) + H2O = (2S,4S)-4-hydroxy-2,3,4,5-tetrahydrodipicolinate + NADPH + H(+). It participates in amino-acid biosynthesis; L-lysine biosynthesis via DAP pathway; (S)-tetrahydrodipicolinate from L-aspartate: step 4/4. In terms of biological role, catalyzes the conversion of 4-hydroxy-tetrahydrodipicolinate (HTPA) to tetrahydrodipicolinate. This Helicobacter pylori (strain HPAG1) protein is 4-hydroxy-tetrahydrodipicolinate reductase.